Reading from the N-terminus, the 950-residue chain is Glycine dehydrogenase (decarboxylating) (950 aa).

Lys-698 carries the N6-(pyridoxal phosphate)lysine modification.

Belongs to the GcvP family. As to quaternary structure, the glycine cleavage system is composed of four proteins: P, T, L and H. It depends on pyridoxal 5'-phosphate as a cofactor.

It carries out the reaction N(6)-[(R)-lipoyl]-L-lysyl-[glycine-cleavage complex H protein] + glycine + H(+) = N(6)-[(R)-S(8)-aminomethyldihydrolipoyl]-L-lysyl-[glycine-cleavage complex H protein] + CO2. Functionally, the glycine cleavage system catalyzes the degradation of glycine. The P protein binds the alpha-amino group of glycine through its pyridoxal phosphate cofactor; CO(2) is released and the remaining methylamine moiety is then transferred to the lipoamide cofactor of the H protein. The protein is Glycine dehydrogenase (decarboxylating) of Neisseria meningitidis serogroup C (strain 053442).